The following is a 653-amino-acid chain: ATP-dependent zinc metalloprotease FtsH 1 (653 aa).

The tract at residues 1–20 is disordered; the sequence is MPENKNDKENKNDKENKNTK. The Cytoplasmic segment spans residues 1–30; sequence MPENKNDKENKNDKENKNTKEEKKKVKFSN. A helical membrane pass occupies residues 31–51; sequence IIWVYIIFAVFFIGALISLNW. Over 52–126 the chain is Periplasmic; it reads ENNPIISYSE…EYVESVGTKW (75 aa). A helical transmembrane segment spans residues 127 to 147; sequence WFGLLINIIPIVVMVLFFFWL. At 148–653 the chain is on the cytoplasmic side; the sequence is YRSASAGARS…VVNHVNYQPV (506 aa). Residue 219–226 coordinates ATP; the sequence is GPPGTGKT. Position 441 (histidine 441) interacts with Zn(2+). Glutamate 442 is a catalytic residue. The Zn(2+) site is built by histidine 445 and aspartate 518.

This sequence in the central section; belongs to the AAA ATPase family. In the C-terminal section; belongs to the peptidase M41 family. Homohexamer. Requires Zn(2+) as cofactor.

Its subcellular location is the cell inner membrane. Its function is as follows. Acts as a processive, ATP-dependent zinc metallopeptidase for both cytoplasmic and membrane proteins. Plays a role in the quality control of integral membrane proteins. The sequence is that of ATP-dependent zinc metalloprotease FtsH 1 from Petrotoga mobilis (strain DSM 10674 / SJ95).